The sequence spans 230 residues: Heptaprenylglyceryl phosphate synthase (230 aa).

Lysine 12 serves as a coordination point for sn-glycerol 1-phosphate. Mg(2+) is bound by residues aspartate 14 and threonine 40. Sn-glycerol 1-phosphate contacts are provided by residues 159 to 164 (YIEYSG), glycine 189, and 209 to 210 (GD).

The protein belongs to the GGGP/HepGP synthase family. Group I subfamily. Homodimer. Mg(2+) is required as a cofactor.

The enzyme catalyses sn-glycerol 1-phosphate + all-trans-heptaprenyl diphosphate = 3-heptaprenyl-sn-glycero-1-phosphate + diphosphate. It functions in the pathway membrane lipid metabolism; glycerophospholipid metabolism. Functionally, prenyltransferase that catalyzes in vivo the transfer of the heptaprenyl moiety of heptaprenyl pyrophosphate (HepPP; 35 carbon atoms) to the C3 hydroxyl of sn-glycerol-1-phosphate (G1P), producing heptaprenylglyceryl phosphate (HepGP). This reaction is an ether-bond-formation step in the biosynthesis of archaea-type G1P-based membrane lipids found in Bacillales. To a much lesser extent, is also able to use geranylgeranyl diphosphate (GGPP; C20) as the prenyl donor. The chain is Heptaprenylglyceryl phosphate synthase from Staphylococcus aureus (strain NCTC 8325 / PS 47).